The following is a 284-amino-acid chain: Bifunctional protein FolD (284 aa).

Residues 164-166, Ser-189, and Ile-230 each bind NADP(+); that span reads GRG.

Belongs to the tetrahydrofolate dehydrogenase/cyclohydrolase family. As to quaternary structure, homodimer.

It catalyses the reaction (6R)-5,10-methylene-5,6,7,8-tetrahydrofolate + NADP(+) = (6R)-5,10-methenyltetrahydrofolate + NADPH. It carries out the reaction (6R)-5,10-methenyltetrahydrofolate + H2O = (6R)-10-formyltetrahydrofolate + H(+). Its pathway is one-carbon metabolism; tetrahydrofolate interconversion. Functionally, catalyzes the oxidation of 5,10-methylenetetrahydrofolate to 5,10-methenyltetrahydrofolate and then the hydrolysis of 5,10-methenyltetrahydrofolate to 10-formyltetrahydrofolate. The chain is Bifunctional protein FolD from Desulforamulus reducens (strain ATCC BAA-1160 / DSM 100696 / MI-1) (Desulfotomaculum reducens).